A 519-amino-acid chain; its full sequence is Glucose-1-phosphate adenylyltransferase large subunit 3, chloroplastic/amyloplastic (519 aa).

The transit peptide at 1-74 (MQFSSVFPLE…DAGPDTLHVR (74 aa)) directs the protein to the chloroplast.

The protein belongs to the bacterial/plant glucose-1-phosphate adenylyltransferase family. Heterotetramer composed of two small and two large subunits. Expressed in stems.

It localises to the plastid. The protein localises to the chloroplast. It carries out the reaction alpha-D-glucose 1-phosphate + ATP + H(+) = ADP-alpha-D-glucose + diphosphate. Its pathway is glycan biosynthesis; starch biosynthesis. With respect to regulation, activated by 3'phosphoglycerate, inhibited by orthophosphate. Allosteric regulation. Functionally, involved in synthesis of starch. Catalyzes the synthesis of ADP-glucose, a molecule that serves as an activated glycosyl donor for alpha-1,4-glucan synthesis. Essential for starch synthesis in leaf chloroplasts. The polypeptide is Glucose-1-phosphate adenylyltransferase large subunit 3, chloroplastic/amyloplastic (Oryza sativa subsp. japonica (Rice)).